We begin with the raw amino-acid sequence, 46 residues long: Large ribosomal subunit protein bL36 (46 aa).

This sequence belongs to the bacterial ribosomal protein bL36 family.

The sequence is that of Large ribosomal subunit protein bL36 from Serratia proteamaculans (strain 568).